We begin with the raw amino-acid sequence, 292 residues long: Coatomer subunit epsilon (292 aa).

It belongs to the COPE family. Oligomeric complex that consists of at least the alpha, beta, beta', gamma, delta, epsilon and zeta subunits.

It is found in the cytoplasm. It localises to the golgi apparatus membrane. The protein resides in the cytoplasmic vesicle. Its subcellular location is the COPI-coated vesicle membrane. Its function is as follows. The coatomer is a cytosolic protein complex that binds to dilysine motifs and reversibly associates with Golgi non-clathrin-coated vesicles, which further mediate biosynthetic protein transport from the ER, via the Golgi up to the trans Golgi network. The coatomer complex is required for budding from Golgi membranes, and is essential for the retrograde Golgi-to-ER transport of dilysine-tagged proteins. The protein is Coatomer subunit epsilon (cope-1) of Caenorhabditis elegans.